Consider the following 118-residue polypeptide: Cobalt transport protein CbiN (118 aa).

2 consecutive transmembrane segments (helical) span residues 7–27 (INAL…VLGL) and 70–90 (SALF…YFGL). Residues 99–118 (ERASAASGAAAAPGDAPEGD) form a disordered region. The segment covering 102 to 118 (SAASGAAAAPGDAPEGD) has biased composition (low complexity).

The protein belongs to the CbiN family. As to quaternary structure, forms an energy-coupling factor (ECF) transporter complex composed of an ATP-binding protein (A component, CbiO), a transmembrane protein (T component, CbiQ) and 2 possible substrate-capture proteins (S components, CbiM and CbiN) of unknown stoichimetry.

It is found in the cell membrane. It participates in cofactor biosynthesis; adenosylcobalamin biosynthesis. In terms of biological role, part of the energy-coupling factor (ECF) transporter complex CbiMNOQ involved in cobalt import. The protein is Cobalt transport protein CbiN of Streptomyces coelicolor (strain ATCC BAA-471 / A3(2) / M145).